A 360-amino-acid polypeptide reads, in one-letter code: Phospho-N-acetylmuramoyl-pentapeptide-transferase (360 aa).

Helical transmembrane passes span 26-46 (AILG…KLIE), 74-94 (MGGL…GDLG), 97-117 (YVWV…IDDY), 134-154 (YILQ…TAAN), 168-188 (VMPQ…VGSS), 199-219 (GLAI…AYLS), 236-256 (SGEL…FLWF), 263-283 (VFMG…IAVL), 288-308 (ILLV…ILQV), and 338-358 (VIVR…ATLK).

Belongs to the glycosyltransferase 4 family. MraY subfamily. Mg(2+) serves as cofactor.

It is found in the cell inner membrane. It catalyses the reaction UDP-N-acetyl-alpha-D-muramoyl-L-alanyl-gamma-D-glutamyl-meso-2,6-diaminopimeloyl-D-alanyl-D-alanine + di-trans,octa-cis-undecaprenyl phosphate = di-trans,octa-cis-undecaprenyl diphospho-N-acetyl-alpha-D-muramoyl-L-alanyl-D-glutamyl-meso-2,6-diaminopimeloyl-D-alanyl-D-alanine + UMP. It functions in the pathway cell wall biogenesis; peptidoglycan biosynthesis. Functionally, catalyzes the initial step of the lipid cycle reactions in the biosynthesis of the cell wall peptidoglycan: transfers peptidoglycan precursor phospho-MurNAc-pentapeptide from UDP-MurNAc-pentapeptide onto the lipid carrier undecaprenyl phosphate, yielding undecaprenyl-pyrophosphoryl-MurNAc-pentapeptide, known as lipid I. The chain is Phospho-N-acetylmuramoyl-pentapeptide-transferase from Shewanella oneidensis (strain ATCC 700550 / JCM 31522 / CIP 106686 / LMG 19005 / NCIMB 14063 / MR-1).